A 79-amino-acid polypeptide reads, in one-letter code: Small ribosomal subunit protein bS18 (79 aa).

This sequence belongs to the bacterial ribosomal protein bS18 family. In terms of assembly, part of the 30S ribosomal subunit. Forms a tight heterodimer with protein bS6.

Functionally, binds as a heterodimer with protein bS6 to the central domain of the 16S rRNA, where it helps stabilize the platform of the 30S subunit. The protein is Small ribosomal subunit protein bS18 of Enterococcus faecalis (strain ATCC 700802 / V583).